The following is a 299-amino-acid chain: Kynurenine formamidase-like hydrolase fscH (299 aa).

Residues 48–52 (HGGAW) carry the HGGXW motif. Residues 90–110 (SPRTPSQPVPSGGHVGGEQQA) are disordered. The active-site Nucleophile is Ser142.

Belongs to the kynurenine formamidase family.

It functions in the pathway secondary metabolite biosynthesis. Its function is as follows. Kynurenine formamidase-like hydrolase; part of the fragmented gene cluster that mediates the biosynthesis of fusarochromene, a tryptophan-derived metabolite closely related to a group of mycotoxins including fusarochromanone. Within the pathway, fscH converts the product of fscD into 4-hydroxykyrunenine. The first step of the pathway is the epimerization of L-tryptophan to D-tryptophan in the presence of the NRPS-like tryptophan epimerase fscC. D-tryptophan is subsequently hydroxylated by the tryptophan 6-hydroxylase fscE to yield 6-hydroxytryptophan. The pyrrole ring undergoes cleavaged by the tryptophan 2,3-dioxygenase fscD and is finally converted to 4-hydroxykyrunenine by the hydrolase fscH. The NRPS-like oxidoreductase fscA reduces the carboxyl group to primary alcohol and the DMATS-type prenyltransferase fscG performs prenylation, followed by the formation of a chromene ring catalyzed by the oxidoreductase fscI, which leads to desacetylfusarochromene. Epoxidation by fscF and rearrangement reactions of chromene double bonds convert compound desacetylfusarochromene to fusarochromanones. Although specific acetyltransferases were not found near the fsc gene cluster, several predicted enzymes containing the N-acetyltransferase superfamily domain are present in the genome of F.equiseti. These predicted enzymes may have the potential to convert desacetylfusarochromene to fusarochromene. The sequence is that of Kynurenine formamidase-like hydrolase fscH from Fusarium equiseti (Fusarium scirpi).